The sequence spans 338 residues: Nicotinate-nucleotide--dimethylbenzimidazole phosphoribosyltransferase (338 aa).

E305 serves as the catalytic Proton acceptor.

It belongs to the CobT family.

The enzyme catalyses 5,6-dimethylbenzimidazole + nicotinate beta-D-ribonucleotide = alpha-ribazole 5'-phosphate + nicotinate + H(+). The protein operates within nucleoside biosynthesis; alpha-ribazole biosynthesis; alpha-ribazole from 5,6-dimethylbenzimidazole: step 1/2. In terms of biological role, catalyzes the synthesis of alpha-ribazole-5'-phosphate from nicotinate mononucleotide (NAMN) and 5,6-dimethylbenzimidazole (DMB). The polypeptide is Nicotinate-nucleotide--dimethylbenzimidazole phosphoribosyltransferase (Rhizobium rhizogenes (strain K84 / ATCC BAA-868) (Agrobacterium radiobacter)).